A 211-amino-acid chain; its full sequence is Small ribosomal subunit protein eS8 (211 aa).

This sequence belongs to the eukaryotic ribosomal protein eS8 family.

This Dictyostelium discoideum (Social amoeba) protein is Small ribosomal subunit protein eS8 (rps8).